The primary structure comprises 970 residues: Disease resistance protein RGA2 (970 aa).

Residues 135–438 (RQAVRRETGS…MAHGFLLSKG (304 aa)) enclose the NB-ARC domain. 182-189 (GMGGLGKT) provides a ligand contact to ATP. LRR repeat units lie at residues 525–548 (FISL…IGDL), 550–571 (HLRY…LCKL), 573–594 (NLQT…ETSK), 595–619 (LGSL…IGSL), 638–662 (LGEL…KNDK), 672–697 (KGNL…EVKV), 752–777 (LPCL…DIDV), 787–811 (FPSL…EGEE), 813–832 (FPVL…LSSN), 833–857 (LRAL…MFKN), 859–882 (ANLK…LASL), 884–906 (ALKS…GLEG), 907–931 (LSSL…LQHL), and 946–970 (IKRC…NIYI).

It belongs to the disease resistance NB-LRR family.

Its function is as follows. Disease resistance protein. Resistance proteins guard the plant against pathogens that contain an appropriate avirulence protein via a direct or indirect interaction with this avirulence protein. That triggers a defense system which restricts the pathogen growth. Confers a broad resistance to all known races of P.infestans. The sequence is that of Disease resistance protein RGA2 (RGA2) from Solanum bulbocastanum (Wild potato).